The chain runs to 313 residues: Aspartate carbamoyltransferase catalytic subunit (313 aa).

R54 and T55 together coordinate carbamoyl phosphate. K82 provides a ligand contact to L-aspartate. Carbamoyl phosphate is bound by residues R104, H132, and Q135. The L-aspartate site is built by R165 and R219. Residues G260 and P261 each coordinate carbamoyl phosphate.

Belongs to the aspartate/ornithine carbamoyltransferase superfamily. ATCase family. As to quaternary structure, heterododecamer (2C3:3R2) of six catalytic PyrB chains organized as two trimers (C3), and six regulatory PyrI chains organized as three dimers (R2).

The catalysed reaction is carbamoyl phosphate + L-aspartate = N-carbamoyl-L-aspartate + phosphate + H(+). The protein operates within pyrimidine metabolism; UMP biosynthesis via de novo pathway; (S)-dihydroorotate from bicarbonate: step 2/3. In terms of biological role, catalyzes the condensation of carbamoyl phosphate and aspartate to form carbamoyl aspartate and inorganic phosphate, the committed step in the de novo pyrimidine nucleotide biosynthesis pathway. This chain is Aspartate carbamoyltransferase catalytic subunit, found in Thermobifida fusca (strain YX).